The following is an 86-amino-acid chain: Selenoprotein W (86 aa).

Residues 10 to 13 (CGGU) constitute a cross-link (cysteinyl-selenocysteine (Cys-Sec); redox-active). Sec-13 is a non-standard amino acid (selenocysteine).

This sequence belongs to the SelWTH family. Selenoprotein W subfamily.

The protein resides in the cytoplasm. Functionally, plays a role as a glutathione (GSH)-dependent antioxidant. May be involved in a redox-related process. May play a role in the myopathies of selenium deficiency. The protein is Selenoprotein W of Danio rerio (Zebrafish).